A 1013-amino-acid chain; its full sequence is 2-oxoglutarate dehydrogenase, mitochondrial (1013 aa).

The N-terminal 39 residues, 1-39 (MFTLKQVINKSIQTSMKNGVMSSAVKRSFSTVGGINQPK), are a transit peptide targeting the mitochondrion. Residues Arg302, Asp403, Asn436, Ile438, and Gln664 each contribute to the thiamine diphosphate site. Mg(2+) is bound by residues Asp403, Asn436, and Ile438.

This sequence belongs to the alpha-ketoglutarate dehydrogenase family. Homodimer. Component of the 2-oxoglutarate dehydrogenase complex. It depends on thiamine diphosphate as a cofactor. Mg(2+) is required as a cofactor.

The protein resides in the mitochondrion matrix. The enzyme catalyses N(6)-[(R)-lipoyl]-L-lysyl-[protein] + 2-oxoglutarate + H(+) = N(6)-[(R)-S(8)-succinyldihydrolipoyl]-L-lysyl-[protein] + CO2. In terms of biological role, the 2-oxoglutarate dehydrogenase complex catalyzes the overall conversion of 2-oxoglutarate to succinyl-CoA and CO(2). It contains multiple copies of three enzymatic components: 2-oxoglutarate dehydrogenase (E1), dihydrolipoamide succinyltransferase (E2) and lipoamide dehydrogenase (E3). This chain is 2-oxoglutarate dehydrogenase, mitochondrial (ogdh), found in Dictyostelium discoideum (Social amoeba).